The following is a 379-amino-acid chain: UDP-4-amino-4-deoxy-L-arabinose--oxoglutarate aminotransferase (379 aa).

Lysine 182 carries the post-translational modification N6-(pyridoxal phosphate)lysine.

Belongs to the DegT/DnrJ/EryC1 family. ArnB subfamily. Homodimer. Pyridoxal 5'-phosphate is required as a cofactor.

It carries out the reaction UDP-4-amino-4-deoxy-beta-L-arabinose + 2-oxoglutarate = UDP-beta-L-threo-pentopyranos-4-ulose + L-glutamate. It participates in nucleotide-sugar biosynthesis; UDP-4-deoxy-4-formamido-beta-L-arabinose biosynthesis; UDP-4-deoxy-4-formamido-beta-L-arabinose from UDP-alpha-D-glucuronate: step 2/3. Its pathway is bacterial outer membrane biogenesis; lipopolysaccharide biosynthesis. In terms of biological role, catalyzes the conversion of UDP-4-keto-arabinose (UDP-Ara4O) to UDP-4-amino-4-deoxy-L-arabinose (UDP-L-Ara4N). The modified arabinose is attached to lipid A and is required for resistance to polymyxin and cationic antimicrobial peptides. The protein is UDP-4-amino-4-deoxy-L-arabinose--oxoglutarate aminotransferase of Salmonella schwarzengrund (strain CVM19633).